Here is a 327-residue protein sequence, read N- to C-terminus: Flap endonuclease 1 (327 aa).

The N-domain stretch occupies residues 1-100 (MGNADLRQLA…DEIADRREQR (100 aa)). The Mg(2+) site is built by Asp28, Asp82, Glu154, Glu156, Asp176, Asp178, and Asp226. The tract at residues 118 to 247 (EAARLDARTQ…TALDAIGEHG (130 aa)) is I-domain. Residues 319–327 (AQTGLDRWT) are interaction with PCNA.

The protein belongs to the XPG/RAD2 endonuclease family. FEN1 subfamily. As to quaternary structure, interacts with PCNA. PCNA stimulates the nuclease activity without altering cleavage specificity. Mg(2+) serves as cofactor.

In terms of biological role, structure-specific nuclease with 5'-flap endonuclease and 5'-3' exonuclease activities involved in DNA replication and repair. During DNA replication, cleaves the 5'-overhanging flap structure that is generated by displacement synthesis when DNA polymerase encounters the 5'-end of a downstream Okazaki fragment. Binds the unpaired 3'-DNA end and kinks the DNA to facilitate 5' cleavage specificity. Cleaves one nucleotide into the double-stranded DNA from the junction in flap DNA, leaving a nick for ligation. Also involved in the base excision repair (BER) pathway. Acts as a genome stabilization factor that prevents flaps from equilibrating into structures that lead to duplications and deletions. Also possesses 5'-3' exonuclease activity on nicked or gapped double-stranded DNA. The polypeptide is Flap endonuclease 1 (Halobacterium salinarum (strain ATCC 29341 / DSM 671 / R1)).